Here is an 85-residue protein sequence, read N- to C-terminus: Putative N.vectensis toxin 1 9 (85 aa).

Residues M1–A20 form the signal peptide. A propeptide spanning residues R21–S36 is cleaved from the precursor. Intrachain disulfides connect C42–C82, C44–C72, and C65–C83.

Belongs to the sea anemone sodium channel inhibitory toxin family. Type II subfamily. As to expression, expressed in ectodermal glands and in clumps outside of the extodermal layer. Is not expressed in nematocytes. In adult female tissues, shows similar expression levels in mesenteries (gametes-producing tissue), tentacles, pharynx and physa.

It localises to the secreted. Its function is as follows. Binds to site 3 of voltage-gated sodium channels and inhibits the inactivation process. Is highly active on DmNav1/TipE (drosophila) and is only extremely weakly active on rat Nav1.4-beta-1/SCN4A-SCN1B, and on human Nav1.5-beta-1/SCN5A-beta-1. This reveals high specificity for arthropod over mammalian channels. In vivo, when released into the medium, this recombinant toxin induces impaired swimming, paralysis and death of the crustacean A.nauplii within several hours. Also causes paralysis of cherry shrimps immediately after injection at very low doses. Its effect on zebrafish (D.rerio) larvae is also rapid, since it induces tail twitching accompanied by impaired swimming after 20 minutes and complete paralysis within 45 minutes. It has also been observed to cause death of zebrafish larvae within 1 hour. The protein is Putative N.vectensis toxin 1 9 of Nematostella vectensis (Starlet sea anemone).